The primary structure comprises 88 residues: UPF0237 protein spr0217 (88 aa).

Residues 4–77 (IITVVGKDKS…QTLNVKINIQ (74 aa)) form the ACT domain.

The protein belongs to the UPF0237 family. Homodimer.

In Streptococcus pneumoniae (strain ATCC BAA-255 / R6), this protein is UPF0237 protein spr0217.